The primary structure comprises 213 residues: 3-isopropylmalate dehydratase small subunit (213 aa).

It belongs to the LeuD family. LeuD type 1 subfamily. As to quaternary structure, heterodimer of LeuC and LeuD.

It catalyses the reaction (2R,3S)-3-isopropylmalate = (2S)-2-isopropylmalate. The protein operates within amino-acid biosynthesis; L-leucine biosynthesis; L-leucine from 3-methyl-2-oxobutanoate: step 2/4. Its function is as follows. Catalyzes the isomerization between 2-isopropylmalate and 3-isopropylmalate, via the formation of 2-isopropylmaleate. The protein is 3-isopropylmalate dehydratase small subunit of Neisseria meningitidis serogroup A / serotype 4A (strain DSM 15465 / Z2491).